The sequence spans 583 residues: COP9 signalosome complex subunit 10 (583 aa).

Residues 1 to 35 (MSDEEDYAEYMMSEEDMSSFEMDVDSDVEPDDAGL) are compositionally biased toward acidic residues. The interval 1–55 (MSDEEDYAEYMMSEEDMSSFEMDVDSDVEPDDAGLEQDQQVTGDDYDGSAGNSGD) is disordered. Positions 297-485 (DHYNQSQMLS…DYVYFGEEYF (189 aa)) constitute a PCI domain.

In terms of assembly, component of a COP9 signalosome-like (CSN) complex.

Its subcellular location is the cytoplasm. It localises to the nucleus. Component of the COP9 signalosome (CSN) complex that acts as an regulator of the ubiquitin (Ubl) conjugation pathway by mediating the deneddylation of the cullin subunit of SCF-type E3 ubiquitin-protein ligase complexes. The CSN complex is involved in the regulation of the mating pheromone response. The protein is COP9 signalosome complex subunit 10 (RRI2) of Kluyveromyces lactis (strain ATCC 8585 / CBS 2359 / DSM 70799 / NBRC 1267 / NRRL Y-1140 / WM37) (Yeast).